The primary structure comprises 891 residues: Protein translocase subunit SecA 1 (891 aa).

ATP contacts are provided by residues Gln85, 103 to 107, and Asp491; that span reads GEGKT. Zn(2+) contacts are provided by Cys877, Cys879, Cys888, and Cys889.

This sequence belongs to the SecA family. As to quaternary structure, monomer and homodimer. Part of the essential Sec protein translocation apparatus which comprises SecA, SecYEG and auxiliary proteins SecDF. Other proteins may also be involved. Zn(2+) is required as a cofactor.

The protein resides in the cell membrane. It is found in the cytoplasm. The enzyme catalyses ATP + H2O + cellular proteinSide 1 = ADP + phosphate + cellular proteinSide 2.. Its function is as follows. Part of the Sec protein translocase complex. Interacts with the SecYEG preprotein conducting channel. Has a central role in coupling the hydrolysis of ATP to the transfer of proteins into and across the cell membrane, serving as an ATP-driven molecular motor driving the stepwise translocation of polypeptide chains across the membrane. The polypeptide is Protein translocase subunit SecA 1 (Clostridioides difficile (strain 630) (Peptoclostridium difficile)).